Here is a 709-residue protein sequence, read N- to C-terminus: Disintegrin and metalloproteinase domain-containing protein 5 (709 aa).

The propeptide occupies 1-98 (MKTPISSILK…TLSGFIHVIY (98 aa)). The Extracellular segment spans residues 1 to 649 (MKTPISSILK…QQNRGIHPKQ (649 aa)). One can recognise a Peptidase M12B domain in the interval 141-334 (RYIKTDIVVD…QDLECLQDLP (194 aa)). 7 cysteine pairs are disulfide-bonded: Cys-247-Cys-329, Cys-289-Cys-314, Cys-291-Cys-296, Cys-406-Cys-426, Cys-585-Cys-597, Cys-591-Cys-603, and Cys-605-Cys-614. The region spanning 346 to 434 (RRICGNGILE…YCVPDTFARN (89 aa)) is the Disintegrin domain. An EGF-like; calcium-binding domain is found at 581-615 (DFQQCNTSRDCNDHGVCNNFNHCHCDKGYNPPYCE). Residues 650 to 670 (QLQLILYITLPLIMIISAVFI) form a helical membrane-spanning segment. Residues 671 to 709 (KQSKLSRLCGRERSEGTSCITEDSVSNTKMTTNEGSTLH) are Cytoplasmic-facing. A disordered region spans residues 690 to 709 (ITEDSVSNTKMTTNEGSTLH).

Interacts with TEX101. As to expression, detected in testis.

It is found in the membrane. This is a non catalytic metalloprotease-like protein. May play a role in sperm-egg fusion. The sequence is that of Disintegrin and metalloproteinase domain-containing protein 5 (Adam5) from Rattus norvegicus (Rat).